The primary structure comprises 410 residues: Phosphoglycerate kinase (410 aa).

Substrate contacts are provided by residues 19-21, Arg-34, 57-60, Arg-114, and Arg-154; these read DLN and HQGK. ATP contacts are provided by residues Glu-332 and 358-361; that span reads GGHS.

This sequence belongs to the phosphoglycerate kinase family. Homodimer.

It localises to the cytoplasm. It carries out the reaction (2R)-3-phosphoglycerate + ATP = (2R)-3-phospho-glyceroyl phosphate + ADP. The protein operates within carbohydrate degradation; glycolysis; pyruvate from D-glyceraldehyde 3-phosphate: step 2/5. The chain is Phosphoglycerate kinase (pgk) from Pyrococcus abyssi (strain GE5 / Orsay).